A 417-amino-acid chain; its full sequence is 4-hydroxy-3-methylbut-2-en-1-yl diphosphate synthase (flavodoxin) (417 aa).

4 residues coordinate [4Fe-4S] cluster: Cys307, Cys310, Cys353, and Glu360.

Belongs to the IspG family. It depends on [4Fe-4S] cluster as a cofactor.

The catalysed reaction is (2E)-4-hydroxy-3-methylbut-2-enyl diphosphate + oxidized [flavodoxin] + H2O + 2 H(+) = 2-C-methyl-D-erythritol 2,4-cyclic diphosphate + reduced [flavodoxin]. It functions in the pathway isoprenoid biosynthesis; isopentenyl diphosphate biosynthesis via DXP pathway; isopentenyl diphosphate from 1-deoxy-D-xylulose 5-phosphate: step 5/6. Converts 2C-methyl-D-erythritol 2,4-cyclodiphosphate (ME-2,4cPP) into 1-hydroxy-2-methyl-2-(E)-butenyl 4-diphosphate. In Xylella fastidiosa (strain 9a5c), this protein is 4-hydroxy-3-methylbut-2-en-1-yl diphosphate synthase (flavodoxin).